Here is a 58-residue protein sequence, read N- to C-terminus: 6.8 kDa protein (58 aa).

This is 6.8 kDa protein from Satellite tobacco mosaic virus (STMV).